The chain runs to 68 residues: U-scoloptoxin(02)-Er1a (68 aa).

An N-terminal signal peptide occupies residues 1 to 20; the sequence is MIVSLRCCLLLVALLITVET. 3 cysteine pairs are disulfide-bonded: Cys30–Cys52, Cys38–Cys58, and Cys42–Cys60.

The protein belongs to the invertebrate defensin family. Expressed by the venom gland.

It is found in the secreted. Its function is as follows. Antibacterial peptide mostly active against Gram-positive bacteria. The chain is U-scoloptoxin(02)-Er1a from Ethmostigmus rubripes (Giant centipede).